A 345-amino-acid chain; its full sequence is Phosphoribosylformylglycinamidine cyclo-ligase (345 aa).

It belongs to the AIR synthase family.

It localises to the cytoplasm. The catalysed reaction is 2-formamido-N(1)-(5-O-phospho-beta-D-ribosyl)acetamidine + ATP = 5-amino-1-(5-phospho-beta-D-ribosyl)imidazole + ADP + phosphate + H(+). Its pathway is purine metabolism; IMP biosynthesis via de novo pathway; 5-amino-1-(5-phospho-D-ribosyl)imidazole from N(2)-formyl-N(1)-(5-phospho-D-ribosyl)glycinamide: step 2/2. This is Phosphoribosylformylglycinamidine cyclo-ligase from Aeromonas hydrophila subsp. hydrophila (strain ATCC 7966 / DSM 30187 / BCRC 13018 / CCUG 14551 / JCM 1027 / KCTC 2358 / NCIMB 9240 / NCTC 8049).